We begin with the raw amino-acid sequence, 143 residues long: Transcriptional regulator MraZ (143 aa).

SpoVT-AbrB domains are found at residues 5 to 47 (EYSH…PQKE) and 76 to 119 (AAEC…SQEL).

This sequence belongs to the MraZ family. In terms of assembly, forms oligomers.

The protein resides in the cytoplasm. It is found in the nucleoid. The polypeptide is Transcriptional regulator MraZ (Carboxydothermus hydrogenoformans (strain ATCC BAA-161 / DSM 6008 / Z-2901)).